The primary structure comprises 151 residues: Regulatory protein RecX (151 aa).

The protein belongs to the RecX family.

It localises to the cytoplasm. Its function is as follows. Modulates RecA activity. The sequence is that of Regulatory protein RecX from Chlorobium phaeobacteroides (strain BS1).